Reading from the N-terminus, the 114-residue chain is UPF0757 protein YmgG (114 aa).

It belongs to the UPF0757 family.

The protein is UPF0757 protein YmgG of Edwardsiella ictaluri (strain 93-146).